We begin with the raw amino-acid sequence, 199 residues long: Large ribosomal subunit protein bL25 (199 aa).

The interval 1–21 is disordered; sequence MNIEKTLSVQKREGYGKGPSG.

This sequence belongs to the bacterial ribosomal protein bL25 family. CTC subfamily. Part of the 50S ribosomal subunit; part of the 5S rRNA/L5/L18/L25 subcomplex. Contacts the 5S rRNA. Binds to the 5S rRNA independently of L5 and L18.

Its function is as follows. This is one of the proteins that binds to the 5S RNA in the ribosome where it forms part of the central protuberance. In Desulfovibrio desulfuricans (strain ATCC 27774 / DSM 6949 / MB), this protein is Large ribosomal subunit protein bL25.